Consider the following 271-residue polypeptide: L-aspartate dehydrogenase (271 aa).

Positions 124 and 192 each coordinate NAD(+). H222 is an active-site residue.

It belongs to the L-aspartate dehydrogenase family.

It catalyses the reaction L-aspartate + NADP(+) + H2O = oxaloacetate + NH4(+) + NADPH + H(+). The catalysed reaction is L-aspartate + NAD(+) + H2O = oxaloacetate + NH4(+) + NADH + H(+). The protein operates within cofactor biosynthesis; NAD(+) biosynthesis; iminoaspartate from L-aspartate (dehydrogenase route): step 1/1. Functionally, specifically catalyzes the NAD or NADP-dependent dehydrogenation of L-aspartate to iminoaspartate. This is L-aspartate dehydrogenase from Methanosarcina acetivorans (strain ATCC 35395 / DSM 2834 / JCM 12185 / C2A).